We begin with the raw amino-acid sequence, 139 residues long: HTH-type transcriptional repressor Mb2911 (139 aa).

The region spanning D6 to S138 is the HTH marR-type domain.

Homodimer.

In terms of biological role, represses expression of the HQNO methyltransferase htm gene by binding to its promoter region. In Mycobacterium bovis (strain ATCC BAA-935 / AF2122/97), this protein is HTH-type transcriptional repressor Mb2911.